A 487-amino-acid polypeptide reads, in one-letter code: WD repeat, SAM and U-box domain-containing protein 1 (487 aa).

WD repeat units follow at residues 10–47 (SHRDDVNCVAFSGDLLATCSADKSICVYSSRDFSELPF), 52–93 (GHGY…AVLE), 95–134 (PGRSPVRVCAFSPDSSHLVSGGSDGSIALWDFTSRTLRRT), 137–176 (VNDTSIVACSFTPCGQMFITGSTYGDLRLWDLNMNHLHAE), 179–227 (AHDL…SAGI), 237–276 (GQSAPVLSCAYSPDGQMLVSGSVDKTVTVYQADEGVLLYT), and 279–318 (QHDRYVTACAFSPTAPLIATGSMDKSVNIWRMEEGSSAQG). The 65-residue stretch at 347 to 411 (WSEEEVLAWL…MKKIEELKMV (65 aa)) folds into the SAM domain. The region spanning 416-487 (GTPDEFLCPI…MAIFRWSTSQ (72 aa)) is the U-box domain.

In Danio rerio (Zebrafish), this protein is WD repeat, SAM and U-box domain-containing protein 1 (wdsub1).